The sequence spans 227 residues: Cytochrome c oxidase subunit 2 (227 aa).

The Mitochondrial intermembrane portion of the chain corresponds to 1–14 (MAYPMQLGFQDATS). The helical transmembrane segment at 15–45 (PIMEELLHFHDHTLMIVFLISSLVLYIISLM) threads the bilayer. Residues 46–59 (LTTKLTHTSTMDAQ) are Mitochondrial matrix-facing. The helical transmembrane segment at 60 to 87 (EVETIWTILPAIILILIALPSLRILYMM) threads the bilayer. At 88–227 (DEINNPSLTV…YFEKWSASML (140 aa)) the chain is on the mitochondrial intermembrane side. Residues His-161, Cys-196, Glu-198, Cys-200, His-204, and Met-207 each contribute to the Cu cation site. Position 198 (Glu-198) interacts with Mg(2+). Residue Tyr-218 is modified to Phosphotyrosine.

The protein belongs to the cytochrome c oxidase subunit 2 family. As to quaternary structure, component of the cytochrome c oxidase (complex IV, CIV), a multisubunit enzyme composed of 14 subunits. The complex is composed of a catalytic core of 3 subunits MT-CO1, MT-CO2 and MT-CO3, encoded in the mitochondrial DNA, and 11 supernumerary subunits COX4I, COX5A, COX5B, COX6A, COX6B, COX6C, COX7A, COX7B, COX7C, COX8 and NDUFA4, which are encoded in the nuclear genome. The complex exists as a monomer or a dimer and forms supercomplexes (SCs) in the inner mitochondrial membrane with NADH-ubiquinone oxidoreductase (complex I, CI) and ubiquinol-cytochrome c oxidoreductase (cytochrome b-c1 complex, complex III, CIII), resulting in different assemblies (supercomplex SCI(1)III(2)IV(1) and megacomplex MCI(2)III(2)IV(2)). Found in a complex with TMEM177, COA6, COX18, COX20, SCO1 and SCO2. Interacts with TMEM177 in a COX20-dependent manner. Interacts with COX20. Interacts with COX16. Cu cation serves as cofactor.

It is found in the mitochondrion inner membrane. The catalysed reaction is 4 Fe(II)-[cytochrome c] + O2 + 8 H(+)(in) = 4 Fe(III)-[cytochrome c] + 2 H2O + 4 H(+)(out). Component of the cytochrome c oxidase, the last enzyme in the mitochondrial electron transport chain which drives oxidative phosphorylation. The respiratory chain contains 3 multisubunit complexes succinate dehydrogenase (complex II, CII), ubiquinol-cytochrome c oxidoreductase (cytochrome b-c1 complex, complex III, CIII) and cytochrome c oxidase (complex IV, CIV), that cooperate to transfer electrons derived from NADH and succinate to molecular oxygen, creating an electrochemical gradient over the inner membrane that drives transmembrane transport and the ATP synthase. Cytochrome c oxidase is the component of the respiratory chain that catalyzes the reduction of oxygen to water. Electrons originating from reduced cytochrome c in the intermembrane space (IMS) are transferred via the dinuclear copper A center (CU(A)) of subunit 2 and heme A of subunit 1 to the active site in subunit 1, a binuclear center (BNC) formed by heme A3 and copper B (CU(B)). The BNC reduces molecular oxygen to 2 water molecules using 4 electrons from cytochrome c in the IMS and 4 protons from the mitochondrial matrix. This is Cytochrome c oxidase subunit 2 (MT-CO2) from Syncerus caffer (African buffalo).